We begin with the raw amino-acid sequence, 95 residues long: Aspartyl/glutamyl-tRNA(Asn/Gln) amidotransferase subunit C (95 aa).

This sequence belongs to the GatC family. Heterotrimer of A, B and C subunits.

The catalysed reaction is L-glutamyl-tRNA(Gln) + L-glutamine + ATP + H2O = L-glutaminyl-tRNA(Gln) + L-glutamate + ADP + phosphate + H(+). The enzyme catalyses L-aspartyl-tRNA(Asn) + L-glutamine + ATP + H2O = L-asparaginyl-tRNA(Asn) + L-glutamate + ADP + phosphate + 2 H(+). In terms of biological role, allows the formation of correctly charged Asn-tRNA(Asn) or Gln-tRNA(Gln) through the transamidation of misacylated Asp-tRNA(Asn) or Glu-tRNA(Gln) in organisms which lack either or both of asparaginyl-tRNA or glutaminyl-tRNA synthetases. The reaction takes place in the presence of glutamine and ATP through an activated phospho-Asp-tRNA(Asn) or phospho-Glu-tRNA(Gln). The protein is Aspartyl/glutamyl-tRNA(Asn/Gln) amidotransferase subunit C of Gluconacetobacter diazotrophicus (strain ATCC 49037 / DSM 5601 / CCUG 37298 / CIP 103539 / LMG 7603 / PAl5).